The sequence spans 229 residues: 2-C-methyl-D-erythritol 4-phosphate cytidylyltransferase (229 aa).

This sequence belongs to the IspD/TarI cytidylyltransferase family. IspD subfamily.

It carries out the reaction 2-C-methyl-D-erythritol 4-phosphate + CTP + H(+) = 4-CDP-2-C-methyl-D-erythritol + diphosphate. The protein operates within isoprenoid biosynthesis; isopentenyl diphosphate biosynthesis via DXP pathway; isopentenyl diphosphate from 1-deoxy-D-xylulose 5-phosphate: step 2/6. Its function is as follows. Catalyzes the formation of 4-diphosphocytidyl-2-C-methyl-D-erythritol from CTP and 2-C-methyl-D-erythritol 4-phosphate (MEP). In Neisseria meningitidis serogroup A / serotype 4A (strain DSM 15465 / Z2491), this protein is 2-C-methyl-D-erythritol 4-phosphate cytidylyltransferase.